Reading from the N-terminus, the 98-residue chain is NADH-ubiquinone oxidoreductase chain 4L (98 aa).

Helical transmembrane passes span 1–21 (MSMV…GMLV), 29–49 (SLLC…VTIL), and 61–81 (IVLL…LVMV).

The protein belongs to the complex I subunit 4L family. As to quaternary structure, core subunit of respiratory chain NADH dehydrogenase (Complex I) which is composed of 45 different subunits.

It localises to the mitochondrion inner membrane. The catalysed reaction is a ubiquinone + NADH + 5 H(+)(in) = a ubiquinol + NAD(+) + 4 H(+)(out). Functionally, core subunit of the mitochondrial membrane respiratory chain NADH dehydrogenase (Complex I) which catalyzes electron transfer from NADH through the respiratory chain, using ubiquinone as an electron acceptor. Part of the enzyme membrane arm which is embedded in the lipid bilayer and involved in proton translocation. This is NADH-ubiquinone oxidoreductase chain 4L (MT-ND4L) from Canis latrans (Coyote).